Consider the following 93-residue polypeptide: Large ribosomal subunit protein uL23cz/uL23cy (93 aa).

Belongs to the universal ribosomal protein uL23 family. As to quaternary structure, part of the 50S ribosomal subunit.

Its subcellular location is the plastid. The protein localises to the chloroplast. Functionally, binds to 23S rRNA. This is Large ribosomal subunit protein uL23cz/uL23cy (rpl23-A) from Lactuca sativa (Garden lettuce).